The following is a 406-amino-acid chain: Putative odorant receptor 65b (406 aa).

Over 1-55 (MDIQRFLKFYKVGWKTYRDPLMEASHSSIYYWREQMKAMALFTTTEERLLPYRSK) the chain is Cytoplasmic. A helical membrane pass occupies residues 56-76 (WHTLVYIQMVIFFASMSFGLT). Topologically, residues 77-88 (ESMGDHVQMGRD) are extracellular. A helical transmembrane segment spans residues 89–109 (LAFILGAFFIIFKTYYFCWYG). At 110–144 (DELDQVISDLDALHPWAQKGPNPVEYQTGKRWYFV) the chain is on the cytoplasmic side. A helical membrane pass occupies residues 145–165 (MAFFLATSWSFFLCILLLLLI). Over 166-218 (TSPMWVHQQNLPFHAAFPFQWHEKSLHPISHAIIYLFQSYFAVYCLTWLLCIE) the chain is Extracellular. The chain crosses the membrane as a helical span at residues 219–239 (GLSICIYAEITFGIEVLCLEL). Over 240–275 (RQIHRHNYGLQELRMETNRLVKLHQKIVEILDRTND) the chain is Cytoplasmic. Residues 276-296 (VFHGTLIMQMGVNFSLVSLSV) form a helical membrane-spanning segment. The Extracellular portion of the chain corresponds to 297 to 307 (LEAVEARKDPK). Residues 308–328 (VVAQFAVLMLLALGHLSMWSY) form a helical membrane-spanning segment. The Cytoplasmic portion of the chain corresponds to 329 to 381 (CGDQLSQKSLQISEAAYEAYDPTKGSKDVYRDLCVIIRRGQDPLIMRASPFPS). The helical transmembrane segment at 382–402 (FNLINYSAILNQCYGILTFLL) threads the bilayer. The Extracellular segment spans residues 403–406 (KTLD).

This sequence belongs to the insect chemoreceptor superfamily. Heteromeric odorant receptor channel (TC 1.A.69) family. Or49a subfamily. In terms of assembly, interacts with Orco. Complexes exist early in the endomembrane system in olfactory sensory neurons (OSNs), coupling these complexes to the conserved ciliary trafficking pathway.

The protein localises to the cell membrane. Odorant receptor which mediates acceptance or avoidance behavior, depending on its substrates. The odorant receptor repertoire encodes a large collection of odor stimuli that vary widely in identity, intensity, and duration. May form a complex with Orco to form odorant-sensing units, providing sensitive and prolonged odorant signaling and calcium permeability. This is Putative odorant receptor 65b (Or65b) from Drosophila melanogaster (Fruit fly).